Consider the following 954-residue polypeptide: MVLLKWLVCQLVFFTAFSHAFTDYLLKKCAQSGFCHRNRVYAENIAKSHHCYYKVDAESIAHDPLENVLHATIIKTIPRLEGDDIAVQFPFSLSFLQDHSVRFTINEKERMPTNSSGLLISSQRFNETWKYAFDKKFQEEANRTSIPQFHFLKQKQTVNSFWSKISSFLSLSNSTADTFHLRNGDVSVEIFAEPFQLKVYWQNALKLIVNEQNFLNIEHHRTKQENFAHVLPEETTFNMFKDNFLYSKHDSMPLGPESVALDFSFMGSTNVYGIPEHATSLRLMDTSGGKEPYRLFNVDVFEYNIGTSQPMYGSIPFMFSSSSTSIFWVNAADTWVDIKYDTSKNKTMTHWISENGVIDVVMSLGPDIPTIIDKFTDLTGRPFLPPISSIGYHQCRWNYNDEMDVLTVDSQMDAHMIPYDFIWLDLEYTNDKKYFTWKQHSFPNPKRLLSKLKKLGRNLVVLIDPHLKKDYEISDRVINENVAVKDHNGNDYVGHCWPGNSIWIDTISKYGQKIWKSFFERFMDLPADLTNLFIWNDMNEPSIFDGPETTAPKDLIHDNYIEERSVHNIYGLSVHEATYDAIKSIYSPSDKRPFLLTRAFFAGSQRTAATWTGDNVANWDYLKISIPMVLSNNIAGMPFIGADIAGFAEDPTPELIARWYQAGLWYPFFRAHAHIDTKRREPYLFNEPLKSIVRDIIQLRYFLLPTLYTMFHKSSVTGFPIMNPMFIEHPEFAELYHIDNQFYWSNSGLLVKPVTEPGQSETEMVFPPGIFYEFASLHSFINNGTDLIEKNISAPLDKIPLFIEGGHIITMKDKYRRSSMLMKNDPYVIVIAPDTEGRAVGDLYVDDGETFGYQRGEYVETQFIFENNTLKNVRSHIPENLTGIHHNTLRNTNIEKIIIAKNNLQHNITLKDSIKVKKNGEESSLPTRSSYENDNKITILNLSLDITEDWEVIF.

Residues 1 to 22 form the signal peptide; the sequence is MVLLKWLVCQLVFFTAFSHAFT. N114, N126, N142, N173, and N345 each carry an N-linked (GlcNAc...) asparagine glycan. The active-site Nucleophile is the D537. Residue E540 is part of the active site. D614 acts as the Proton donor in catalysis. Residues N783, N791, N867, N880, N907, and N941 are each glycosylated (N-linked (GlcNAc...) asparagine).

It belongs to the glycosyl hydrolase 31 family. In terms of assembly, heterodimer of a catalytic subunit alpha (ROT2) and a subunit beta (GTB1).

The protein localises to the endoplasmic reticulum. The catalysed reaction is N(4)-(alpha-D-Glc-(1-&gt;3)-alpha-D-Man-(1-&gt;2)-alpha-D-Man-(1-&gt;2)-alpha-D-Man-(1-&gt;3)-[alpha-D-Man-(1-&gt;2)-alpha-D-Man-(1-&gt;3)-[alpha-D-Man-(1-&gt;2)-alpha-D-Man-(1-&gt;6)]-alpha-D-Man-(1-&gt;6)]-beta-D-Man-(1-&gt;4)-beta-D-GlcNAc-(1-&gt;4)-beta-D-GlcNAc)-L-asparaginyl-[protein] + H2O = N(4)-(alpha-D-Man-(1-&gt;2)-alpha-D-Man-(1-&gt;2)-alpha-D-Man-(1-&gt;3)-[alpha-D-Man-(1-&gt;2)-alpha-D-Man-(1-&gt;3)-[alpha-D-Man-(1-&gt;2)-alpha-D-Man-(1-&gt;6)]-alpha-D-Man-(1-&gt;6)]-beta-D-Man-(1-&gt;4)-beta-D-GlcNAc-(1-&gt;4)-beta-D-GlcNAc)-L-asparaginyl-[protein] (N-glucan mannose isomer 9A1,2,3B1,2,3) + beta-D-glucose. It catalyses the reaction N(4)-(alpha-D-Glc-(1-&gt;3)-alpha-D-Glc-(1-&gt;3)-alpha-D-Man-(1-&gt;2)-alpha-D-Man-(1-&gt;2)-alpha-D-Man-(1-&gt;3)-[alpha-D-Man-(1-&gt;2)-alpha-D-Man-(1-&gt;3)-[alpha-D-Man-(1-&gt;2)-alpha-D-Man-(1-&gt;6)]-alpha-D-Man-(1-&gt;6)]-beta-D-Man-(1-&gt;4)-beta-D-GlcNAc-(1-&gt;4)-beta-D-GlcNAc)-L-asparaginyl-[protein] + H2O = N(4)-(alpha-D-Glc-(1-&gt;3)-alpha-D-Man-(1-&gt;2)-alpha-D-Man-(1-&gt;2)-alpha-D-Man-(1-&gt;3)-[alpha-D-Man-(1-&gt;2)-alpha-D-Man-(1-&gt;3)-[alpha-D-Man-(1-&gt;2)-alpha-D-Man-(1-&gt;6)]-alpha-D-Man-(1-&gt;6)]-beta-D-Man-(1-&gt;4)-beta-D-GlcNAc-(1-&gt;4)-beta-D-GlcNAc)-L-asparaginyl-[protein] + beta-D-glucose. The protein operates within glycan metabolism; N-glycan metabolism. Inhibited by glucose, maltose and nigerose, and by the antibiotic deoxynojirimycin. Its function is as follows. Catalytic subunit of glucosidase 2, which cleaves sequentially the 2 innermost alpha-1,3-linked glucose residues from the Glc(2)Man(9)GlcNAc(2) oligosaccharide precursor of immature glycoproteins. This Saccharomyces cerevisiae (strain ATCC 204508 / S288c) (Baker's yeast) protein is Glucosidase 2 subunit alpha (ROT2).